We begin with the raw amino-acid sequence, 318 residues long: Magnetosome protein MamM (318 aa).

A transmembrane domain (TMD) region spans residues 1–210; that stretch reads MRKSGCAVCS…FMDAYRGLMD (210 aa). 4 helical membrane passes run 13-33, 39-59, 81-101, and 117-137; these read IGWV…FVGL, AMLA…MVII, FILS…LLVH, and LIVL…YFYS. Residues 211 to 318 are C-terminal domain (CTD); sequence HTAGEAVQNR…DEVMLSKVDN (108 aa). Residues aspartate 249, histidine 264, histidine 285, and glutamate 289 each coordinate Fe cation.

This sequence belongs to the cation diffusion facilitator (CDF) transporter (TC 2.A.4) family. As to quaternary structure, forms homodimers via its C-terminal domain (CTD) in the presence of metal cations. Interacts with MamB via their CTD. Isolated CTD forms homodimers.

Its subcellular location is the magnetosome membrane. The protein resides in the cell inner membrane. In terms of biological role, essential for magnetosome formation; required for stable accumulation of MamB. May nucleate iron crystal formation. Probably binds and transports iron. Binds divalent cations, possibly up to 3 Zn(2+) per dimer in vitro, probably iron in vivo. One of 7 genes (mamLQBIEMO) able to induce magnetosome membrane biogenesis; coexpression of mamLQRBIEMO in a deletion of the 17 gene mamAB operon restores magnetosome vesicle formation but not magnetite biosynthesis. The polypeptide is Magnetosome protein MamM (Magnetospirillum gryphiswaldense (strain DSM 6361 / JCM 21280 / NBRC 15271 / MSR-1)).